Here is a 249-residue protein sequence, read N- to C-terminus: Oxidoreductase asL5 (249 aa).

The NADP(+) site is built by I21, K45, N90, Y155, K159, I188, and T190. Y155 serves as the catalytic Proton acceptor. K159 functions as the Lowers pKa of active site Tyr in the catalytic mechanism.

The protein belongs to the short-chain dehydrogenases/reductases (SDR) family.

Oxidoreductase; part of the gene cluster that mediates the biosynthesis of xenovulene A, an unusual meroterpenoid that has potent inhibitory effects on the human gamma-aminobutyrate A (GABAA) benzodiazepine receptor. The first step of xenovulene A biosynthesis is the biosynthesis of 3-methylorcinaldehyde performed by the non-reducing polyketide synthase aspks1. The salicylate hydroxylase asL1 then catalyzes the oxidative dearomatization of 3-methylorcinaldehyde to yield a dearomatized hydroxycyclohexadione. The 2-oxoglutarate-dependent dioxygenase asL3 further catalyzes the oxidative ring expansion to provide the first tropolone metabolite. The cytochrome P450 monooxygenase asR2 allows the synthesis of tropolone hemiacetal. In parallel, a previously unrecognised class of terpene cyclase, asR6, produces alpha-humulene from farnesylpyrophosphate (FPP). The putative Diels-Alderase asR5 probably catalyzes the formation of the tropolone-humulene skeleton by linking humulene and the polyketide moiety. Oxidative-ring contractions catalyzed by asL4 and asL6 then processively remove carbon atoms from the polyketide to yield xenovulene A. This is Oxidoreductase asL5 from Sarocladium schorii (Acremonium strictum (strain IMI 501407)).